Reading from the N-terminus, the 81-residue chain is Photosystem I iron-sulfur center (81 aa).

2 4Fe-4S ferredoxin-type domains span residues 2 to 31 (SHTVKIYDTCIGCTQCVRACPTDVLEMVPW) and 37 to 68 (GQIASSPRVEDCVGCKRCETACPTDFLSVRVY). [4Fe-4S] cluster is bound by residues C11, C14, C17, C21, C48, C51, C54, and C58.

In terms of assembly, the eukaryotic PSI reaction center is composed of at least 11 subunits. It depends on [4Fe-4S] cluster as a cofactor.

It is found in the plastid. It localises to the chloroplast thylakoid membrane. It catalyses the reaction reduced [plastocyanin] + hnu + oxidized [2Fe-2S]-[ferredoxin] = oxidized [plastocyanin] + reduced [2Fe-2S]-[ferredoxin]. In terms of biological role, apoprotein for the two 4Fe-4S centers FA and FB of photosystem I (PSI); essential for photochemical activity. FB is the terminal electron acceptor of PSI, donating electrons to ferredoxin. The C-terminus interacts with PsaA/B/D and helps assemble the protein into the PSI complex. Required for binding of PsaD and PsaE to PSI. PSI is a plastocyanin/cytochrome c6-ferredoxin oxidoreductase, converting photonic excitation into a charge separation, which transfers an electron from the donor P700 chlorophyll pair to the spectroscopically characterized acceptors A0, A1, FX, FA and FB in turn. The polypeptide is Photosystem I iron-sulfur center (Phaeodactylum tricornutum (strain CCAP 1055/1)).